The following is a 74-amino-acid chain: Cytochrome b (74 aa).

A helical transmembrane segment spans residues 34-54 (FGSLLAICLVTQILTGLLLAM).

This sequence belongs to the cytochrome b family. The cytochrome bc1 complex contains 11 subunits: 3 respiratory subunits (MT-CYB, CYC1 and UQCRFS1), 2 core proteins (UQCRC1 and UQCRC2) and 6 low-molecular weight proteins (UQCRH/QCR6, UQCRB/QCR7, UQCRQ/QCR8, UQCR10/QCR9, UQCR11/QCR10 and a cleavage product of UQCRFS1). This cytochrome bc1 complex then forms a dimer. Requires heme as cofactor.

The protein resides in the mitochondrion inner membrane. Component of the ubiquinol-cytochrome c reductase complex (complex III or cytochrome b-c1 complex) that is part of the mitochondrial respiratory chain. The b-c1 complex mediates electron transfer from ubiquinol to cytochrome c. Contributes to the generation of a proton gradient across the mitochondrial membrane that is then used for ATP synthesis. This Anser caerulescens (Snow goose) protein is Cytochrome b (MT-CYB).